The sequence spans 335 residues: MPNSNNQLLKEIRFDWNKEEILEILDMPLIDLMWESQTVHRKFNKYNIQLASLFSVKTGGCEENCSYCSQSIYSASEIKSHPQFQVEEVMARAKIAKNEGADRFCMGWAWREIRDGKSFNAMLEMVSGVRDLGMEACVTAGMLTEEQASRLADAGLTAYNHNLDTSPEHYKNIITTRTYQDRLDTIKRVRNAGINVCCGGIIGLGETNGDRASLLEVLSNMNPHPESVPINSLVAIEGTGLEDNQEIDSIEMIRMIATARILMPKSKIRLSAGREKLSKEAQILCFQCGANSIFYGDELLTTSNPSFQSDRKLLKEVGVSFNKDFETREKTLFSL.

The region spanning 46-274 (YNIQLASLFS…KSKIRLSAGR (229 aa)) is the Radical SAM core domain. Residues cysteine 61, cysteine 65, and cysteine 68 each contribute to the [4Fe-4S] cluster site. [2Fe-2S] cluster contacts are provided by cysteine 105, cysteine 137, cysteine 197, and arginine 269.

This sequence belongs to the radical SAM superfamily. Biotin synthase family. In terms of assembly, homodimer. [4Fe-4S] cluster is required as a cofactor. [2Fe-2S] cluster serves as cofactor.

It catalyses the reaction (4R,5S)-dethiobiotin + (sulfur carrier)-SH + 2 reduced [2Fe-2S]-[ferredoxin] + 2 S-adenosyl-L-methionine = (sulfur carrier)-H + biotin + 2 5'-deoxyadenosine + 2 L-methionine + 2 oxidized [2Fe-2S]-[ferredoxin]. It functions in the pathway cofactor biosynthesis; biotin biosynthesis; biotin from 7,8-diaminononanoate: step 2/2. Its function is as follows. Catalyzes the conversion of dethiobiotin (DTB) to biotin by the insertion of a sulfur atom into dethiobiotin via a radical-based mechanism. The chain is Biotin synthase from Prochlorococcus marinus (strain MIT 9312).